We begin with the raw amino-acid sequence, 418 residues long: Translation initiation factor 2 subunit gamma (418 aa).

The tr-type G domain occupies 7–206 (QPEVNIGVVG…GIQKYIPTPQ (200 aa)). Residues 16-23 (GHVDHGKT) form a G1 region. Asp-19, Thr-23, Gly-44, and Thr-46 together coordinate Mg(2+). 19–24 (DHGKTT) serves as a coordination point for GTP. Residues 44–48 (GMTIK) form a G2 region. Zn(2+) contacts are provided by Cys-59, Cys-62, Cys-74, and Cys-77. The interval 93-96 (DAPG) is G3. Residues 149 to 152 (NKVD) and 184 to 186 (SAL) contribute to the GTP site. The tract at residues 149–152 (NKVD) is G4. The segment at 184–186 (SAL) is G5.

The protein belongs to the TRAFAC class translation factor GTPase superfamily. Classic translation factor GTPase family. EIF2G subfamily. In terms of assembly, heterotrimer composed of an alpha, a beta and a gamma chain. Requires Mg(2+) as cofactor.

The enzyme catalyses GTP + H2O = GDP + phosphate + H(+). Functionally, eIF-2 functions in the early steps of protein synthesis by forming a ternary complex with GTP and initiator tRNA. In Sulfurisphaera tokodaii (strain DSM 16993 / JCM 10545 / NBRC 100140 / 7) (Sulfolobus tokodaii), this protein is Translation initiation factor 2 subunit gamma.